Reading from the N-terminus, the 459-residue chain is MTMLWLAVLLTCGAPAALLPTSGVGCPARCDPSSCSPAPTNCQSGETALRCGCCSVCAAAENERCGEGPEDPLCASGLRCVRNGGVTRCQCPSNQPVCGSDGKTYSSLCRLQAESKAVQGRGVAAIIPIQRGDCQQGQKDPDSPRYKYNFIADVVEKIAPAVVHIELFRILPFFKREVPAASGSGFIVSEDGLILTNAHVVTNKHRLKVERSDGSTYDAQIIDVDEKADIALIKIKAKGKLPVLLLGRSEELRPGEFVVAIGSPFSLQNTVTTGIVSTAQRGGKELGLRNSDMDYIQTDAIINYGNSGGPLVNLDGEVVGINTLKVTAGISFAIPSDKIRKFMAESHNRQSTGQGTKKKKYLGIRMMSLSQGKLKELKEQVKDFPENTSGAYIVEVLPDTPAEEAGLKEGDIIISISGKTVTSSSEVSEAIKKEGTLQMVIRRGNEDIPISVTPKEIEF.

A signal peptide spans 1 to 18 (MTMLWLAVLLTCGAPAAL). The 71-residue stretch at 22–92 (SGVGCPARCD…NGGVTRCQCP (71 aa)) folds into the IGFBP N-terminal domain. 8 disulfides stabilise this stretch: Cys26–Cys51, Cys30–Cys53, Cys35–Cys54, Cys42–Cys57, Cys65–Cys80, Cys74–Cys89, Cys91–Cys109, and Cys98–Cys134. The Kazal-like domain maps to 74–136 (CASGLRCVRN…IPIQRGDCQQ (63 aa)). A serine protease region spans residues 183 to 343 (GSGFIVSEDG…IPSDKIRKFM (161 aa)). Residues His199, Asp229, and Ser307 each act as charge relay system in the active site. The region spanning 344–446 (AESHNRQSTG…LQMVIRRGNE (103 aa)) is the PDZ domain.

It belongs to the peptidase S1C family. In terms of assembly, forms homotrimers. In the presence of substrate, may form higher-order multimers in a PDZ-independent manner.

The protein localises to the cell membrane. The protein resides in the secreted. Its subcellular location is the cytoplasm. It localises to the cytosol. Its function is as follows. Serine protease with a variety of targets, including extracellular matrix proteins and proteoglycans such as biglycan, syndecan-4 and glypican-4. Through cleavage of proteoglycans, may release soluble FGF-glycosaminoglycan complexes that promote the range and intensity of FGF signals in the extracellular space. Consequently, facilitates inductive processes in the developing embryo, such as posteriorization, mesoderm induction and neuronal differentiation. Regulates the availability of insulin-like growth factors (IGFs) by cleaving IGF-binding proteins. Inhibits signaling mediated by TGF-beta family members. Consequently, may regulate many physiological processes. Intracellularly, degrades TSC2, leading to the activation of TSC2 downstream targets. The chain is Serine protease HTRA1 (htra1) from Xenopus laevis (African clawed frog).